Reading from the N-terminus, the 138-residue chain is Flagellar assembly factor FliW (138 aa).

The protein belongs to the FliW family. As to quaternary structure, interacts with translational regulator CsrA and flagellin(s).

The protein resides in the cytoplasm. Functionally, acts as an anti-CsrA protein, binds CsrA and prevents it from repressing translation of its target genes, one of which is flagellin. Binds to flagellin and participates in the assembly of the flagellum. The chain is Flagellar assembly factor FliW from Symbiobacterium thermophilum (strain DSM 24528 / JCM 14929 / IAM 14863 / T).